Here is a 135-residue protein sequence, read N- to C-terminus: Large ribosomal subunit protein uL22c (135 aa).

This sequence belongs to the universal ribosomal protein uL22 family. In terms of assembly, part of the 50S ribosomal subunit.

It is found in the plastid. This protein binds specifically to 23S rRNA. In terms of biological role, the globular domain of the protein is located near the polypeptide exit tunnel on the outside of the subunit, while an extended beta-hairpin is found that lines the wall of the exit tunnel in the center of the 70S ribosome. The protein is Large ribosomal subunit protein uL22c (rpl22) of Cuscuta exaltata (Tall dodder).